A 105-amino-acid chain; its full sequence is Large ribosomal subunit protein eL36 (105 aa).

Residues 86–105 (QAGKKKRDDIANINRKASAK) are disordered.

It belongs to the eukaryotic ribosomal protein eL36 family.

In Dictyostelium discoideum (Social amoeba), this protein is Large ribosomal subunit protein eL36 (rpl36).